The chain runs to 724 residues: Catalase-peroxidase (724 aa).

Residues 98-226 (WHSAGSYRLA…LAAVQMGLIY (129 aa)) constitute a cross-link (tryptophyl-tyrosyl-methioninium (Trp-Tyr) (with M-252)). H99 (proton acceptor) is an active-site residue. The segment at residues 226–252 (YVNPEGVNGKPDPLKTAAQVRTTFARM) is a cross-link (tryptophyl-tyrosyl-methioninium (Tyr-Met) (with W-98)). H267 lines the heme b pocket.

Belongs to the peroxidase family. Peroxidase/catalase subfamily. As to quaternary structure, homodimer or homotetramer. Heme b is required as a cofactor. Post-translationally, formation of the three residue Trp-Tyr-Met cross-link is important for the catalase, but not the peroxidase activity of the enzyme.

The enzyme catalyses H2O2 + AH2 = A + 2 H2O. It catalyses the reaction 2 H2O2 = O2 + 2 H2O. Its function is as follows. Bifunctional enzyme with both catalase and broad-spectrum peroxidase activity. The protein is Catalase-peroxidase of Maricaulis maris (strain MCS10) (Caulobacter maris).